A 348-amino-acid polypeptide reads, in one-letter code: WRKY transcription factor WRKY71 (348 aa).

The stretch at valine 50–glutamine 84 forms a coiled coil. 2 disordered regions span residues alanine 91–histidine 141 and glycine 246–valine 287. Positions asparagine 102 to proline 114 are enriched in low complexity. Positions arginine 116–serine 122 match the Nuclear localization signal motif. Positions serine 126–histidine 136 are enriched in pro residues. The WRKY DNA-binding region spans aspartate 187–proline 253. The interval serine 267–aspartate 348 is transcription repression of gibberellic acid (GA)-induced promoters. Pro residues predominate over residues proline 275–valine 286.

This sequence belongs to the WRKY group II-a family. As to quaternary structure, interacts with WRKY51; this interaction promotes W box binding of the complex WRKY51/WRKY71 in a zinc ion-dependent manner. Highly expressed in aleurone cells. In seeds, predominantly present in the plumule, radicle and scutellum of the embryo. Expressed in roots, stems, young leaves and spikelets.

It localises to the nucleus. Functionally, transcription repressor. Interacts specifically with the W box (5'-(T)TGAC[CT]-3'), a frequently occurring elicitor-responsive cis-acting element. Represses specifically gibberellic acid (GA)-induced promoters in aleurone cells, probably by interfering with GAM1. Regulates, probably indirectly, the activation of defense-related genes such as GF14E during defense response. Modulates plant innate immunity against X.oryzae pv. oryzae (Xoo). Confers resistance to the virulent bacterial pathogen X.oryzae pv. oryzae (Xoo) 13751, probably via the regulation of NPR1 and PR1b defense signaling pathways. The polypeptide is WRKY transcription factor WRKY71 (Oryza sativa subsp. indica (Rice)).